The following is a 356-amino-acid chain: Inositol monophosphatase 3 (356 aa).

A helical transmembrane segment spans residues 11–31 (LGIGVFCLLGLGVLYHVYSGF). Residues E127, D167, L169, D170, and D293 each coordinate Mg(2+). E127 lines the substrate pocket. Residues 169–172 (LDAT) and D293 each bind substrate.

This sequence belongs to the inositol monophosphatase superfamily. The cofactor is Mg(2+).

It is found in the membrane. It catalyses the reaction a myo-inositol phosphate + H2O = myo-inositol + phosphate. Its pathway is polyol metabolism; myo-inositol biosynthesis; myo-inositol from D-glucose 6-phosphate: step 2/2. In Xenopus tropicalis (Western clawed frog), this protein is Inositol monophosphatase 3 (bpnt2).